The following is a 248-amino-acid chain: Probable transcriptional regulatory protein SO_2432 (248 aa).

The protein belongs to the TACO1 family.

The protein resides in the cytoplasm. The sequence is that of Probable transcriptional regulatory protein SO_2432 from Shewanella oneidensis (strain ATCC 700550 / JCM 31522 / CIP 106686 / LMG 19005 / NCIMB 14063 / MR-1).